The following is a 131-amino-acid chain: Large ribosomal subunit protein bL17 (131 aa).

This sequence belongs to the bacterial ribosomal protein bL17 family. Part of the 50S ribosomal subunit. Contacts protein L32.

This is Large ribosomal subunit protein bL17 from Cupriavidus necator (strain ATCC 17699 / DSM 428 / KCTC 22496 / NCIMB 10442 / H16 / Stanier 337) (Ralstonia eutropha).